The chain runs to 304 residues: Fructose permease IIC component (304 aa).

A PTS EIIC type-2 domain is found at 1 to 304 (IHSADPKDPT…GIIKKPVEEK (304 aa)). Helical transmembrane passes span 20–40 (FIGS…FIAM), 62–82 (NAGF…VILL), 98–118 (PVLI…QFVI), 140–160 (NLVL…GGPL), 181–201 (AAIM…TTFF), 214–234 (ITCY…FAAA), 238–258 (VIPA…FFRV), and 277–297 (LLYL…LGII).

Its subcellular location is the cell membrane. In terms of biological role, the phosphoenolpyruvate-dependent sugar phosphotransferase system (PTS), a major carbohydrate active -transport system, catalyzes the phosphorylation of incoming sugar substrates concomitant with their translocation across the cell membrane. This system is involved in fructose transport. This is Fructose permease IIC component (fruA) from Bacillus amyloliquefaciens (Bacillus velezensis).